A 192-amino-acid chain; its full sequence is Small ribosomal subunit protein bS16 (192 aa).

A compositionally biased stretch (basic and acidic residues) spans 149–161; it reads EKKAAEAKAKAEA. The disordered stretch occupies residues 149–192; it reads EKKAAEAKAKAEAEAAAAAEEATETEETPMEAAAEEAPAAESAE. Low complexity predominate over residues 178-192; the sequence is MEAAAEEAPAAESAE.

Belongs to the bacterial ribosomal protein bS16 family.

In Porphyromonas gingivalis (strain ATCC 33277 / DSM 20709 / CIP 103683 / JCM 12257 / NCTC 11834 / 2561), this protein is Small ribosomal subunit protein bS16.